We begin with the raw amino-acid sequence, 308 residues long: MSWLEKILEKSNIVSSRKASIPEGVWTKCTSCEQVLYYAELERNLEVCPKCDHHMRMKARRRLETFLDQGERVELGEELEPQDKLKFKDSKRYKERLAAAQKASGEKDALVVMKGAVLGVPVVACAFEFSFMGGSMGSVVGARFVRAVEAAIEHNCGLICFSASGGARMQEALMSLMQMAKTSAALERLSDKGLPFISVMTDPTMGGVSASLAMLGDINIGEPKALIGFAGRRVIEQTVREELPEGFQRSEFLLEHGAIDMIVDRRDMRQRVASLLAKMTGQASPLVVSVNDAPNEVPYAVPEANKKG.

A CoA carboxyltransferase N-terminal domain is found at 25-294 (VWTKCTSCEQ…PLVVSVNDAP (270 aa)). Residues Cys-29, Cys-32, Cys-48, and Cys-51 each coordinate Zn(2+). A C4-type zinc finger spans residues 29–51 (CTSCEQVLYYAELERNLEVCPKC).

It belongs to the AccD/PCCB family. In terms of assembly, acetyl-CoA carboxylase is a heterohexamer composed of biotin carboxyl carrier protein (AccB), biotin carboxylase (AccC) and two subunits each of ACCase subunit alpha (AccA) and ACCase subunit beta (AccD). The cofactor is Zn(2+).

Its subcellular location is the cytoplasm. The catalysed reaction is N(6)-carboxybiotinyl-L-lysyl-[protein] + acetyl-CoA = N(6)-biotinyl-L-lysyl-[protein] + malonyl-CoA. It participates in lipid metabolism; malonyl-CoA biosynthesis; malonyl-CoA from acetyl-CoA: step 1/1. Its function is as follows. Component of the acetyl coenzyme A carboxylase (ACC) complex. Biotin carboxylase (BC) catalyzes the carboxylation of biotin on its carrier protein (BCCP) and then the CO(2) group is transferred by the transcarboxylase to acetyl-CoA to form malonyl-CoA. The polypeptide is Acetyl-coenzyme A carboxylase carboxyl transferase subunit beta (Vibrio cholerae serotype O1 (strain ATCC 39315 / El Tor Inaba N16961)).